The primary structure comprises 274 residues: Large ribosomal subunit protein uL2 (274 aa).

2 disordered regions span residues 38 to 57 and 224 to 256; these read KRTGGRNNNGHITTRHVGGG and AMNPIDHPHGGGEGRNKGIQPVSPWGQKAKGYK. The span at 229 to 239 shows a compositional bias: basic and acidic residues; sequence DHPHGGGEGRN.

Belongs to the universal ribosomal protein uL2 family. As to quaternary structure, part of the 50S ribosomal subunit. Forms a bridge to the 30S subunit in the 70S ribosome.

In terms of biological role, one of the primary rRNA binding proteins. Required for association of the 30S and 50S subunits to form the 70S ribosome, for tRNA binding and peptide bond formation. It has been suggested to have peptidyltransferase activity; this is somewhat controversial. Makes several contacts with the 16S rRNA in the 70S ribosome. This is Large ribosomal subunit protein uL2 from Acinetobacter baumannii (strain AB307-0294).